The primary structure comprises 400 residues: Phosphoglycerate kinase (400 aa).

Substrate-binding positions include 22-24 (DLN), R37, 60-63 (HLGR), R119, and R159. Residues K209, G297, E328, and 354–357 (GGDS) contribute to the ATP site.

The protein belongs to the phosphoglycerate kinase family. As to quaternary structure, monomer.

Its subcellular location is the cytoplasm. It catalyses the reaction (2R)-3-phosphoglycerate + ATP = (2R)-3-phospho-glyceroyl phosphate + ADP. Its pathway is carbohydrate degradation; glycolysis; pyruvate from D-glyceraldehyde 3-phosphate: step 2/5. The protein is Phosphoglycerate kinase of Saccharopolyspora erythraea (strain ATCC 11635 / DSM 40517 / JCM 4748 / NBRC 13426 / NCIMB 8594 / NRRL 2338).